The sequence spans 620 residues: Chaperone protein HscA homolog (620 aa).

Belongs to the heat shock protein 70 family.

Functionally, chaperone involved in the maturation of iron-sulfur cluster-containing proteins. Has a low intrinsic ATPase activity which is markedly stimulated by HscB. This chain is Chaperone protein HscA homolog, found in Pseudomonas entomophila (strain L48).